An 85-amino-acid chain; its full sequence is U4-theraphotoxin-Hhn1a (85 aa).

The signal sequence occupies residues 1–22 (MKVTLIAILTCAAVLVLHTTAA). Residues 23–48 (EELEAESQPMEVGMPDTELAAVDEER) constitute a propeptide that is removed on maturation. 3 disulfides stabilise this stretch: cysteine 52/cysteine 66, cysteine 56/cysteine 77, and cysteine 71/cysteine 82.

The protein belongs to the neurotoxin 12 (Hwtx-2) family. 02 (Hwtx-2) subfamily. Monomer. In terms of tissue distribution, expressed by the venom gland.

The protein localises to the secreted. Functionally, neurotoxin active on both insects and mammals. The polypeptide is U4-theraphotoxin-Hhn1a (Cyriopagopus hainanus (Chinese bird spider)).